The chain runs to 311 residues: Pyrimidine-specific ribonucleoside hydrolase RihA (311 aa).

His240 is an active-site residue.

It belongs to the IUNH family. RihA subfamily.

Its function is as follows. Hydrolyzes with equal efficiency cytidine or uridine to ribose and cytosine or uracil, respectively. This is Pyrimidine-specific ribonucleoside hydrolase RihA from Escherichia fergusonii (strain ATCC 35469 / DSM 13698 / CCUG 18766 / IAM 14443 / JCM 21226 / LMG 7866 / NBRC 102419 / NCTC 12128 / CDC 0568-73).